A 1226-amino-acid polypeptide reads, in one-letter code: Chromosome partition protein Smc (1226 aa).

32–39 (PNGCGKSN) contributes to the ATP binding site. Coiled-coil stretches lie at residues 173 to 231 (ITKF…IKRN) and 269 to 491 (NSLE…SKSL). One can recognise an SMC hinge domain in the interval 527–635 (YQLLGNLIQC…FDGYFIASKF (109 aa)). 3 coiled-coil regions span residues 679 to 741 (QGVV…AAKK), 775 to 965 (MLES…LREA), and 1006 to 1078 (HRRY…KSKE).

The protein belongs to the SMC family. As to quaternary structure, homodimer.

Its subcellular location is the cytoplasm. In terms of biological role, required for chromosome condensation and partitioning. The protein is Chromosome partition protein Smc of Halobacteriovorax marinus (strain ATCC BAA-682 / DSM 15412 / SJ) (Bacteriovorax marinus).